We begin with the raw amino-acid sequence, 449 residues long: MSATPSTLVWAAAADPDLHAFADDPFWLILLKAVAVFAFLLLMTLFAIVFERKVVAKMQQRVGPNRHGPRGWLQSLADGAKLMLKEDLIPVLADKPIFILAPIVSAVPAFLAFAVIPFGPEVSIFGERTTLQLADLPVSVLYLLAAASLGVYGLILSGWSSGSTYPLLGSLRSAAQIISYEVAMGLAFVAVFIYAGTLSTSGIVAGQSGRWYIVLVPSFVLYCISMVGETNRTPFDLPEAEGELVGGFHTEYSSIKFAFFFLAEYINMVTVSAIATTLFLGGWQPPPIPGLSGLNSGWVPLIWFVLKLLAFLFFFIWLRGTLPRLRYDQFMSFGWKVLIPVGLVWVLAVATFRVYQKHVDDRTPWLVGFGVVVGILLIVALIDPGGARHQRELEEAEQRKLAEAPSLDRIPWPPPPQAAGRGRPAVSAGASANGSSTVIPADPGPRQER.

The next 9 membrane-spanning stretches (helical) occupy residues 29-49 (ILLK…FAIV), 96-116 (PIFI…FAVI), 136-156 (LPVS…GLIL), 177-197 (IISY…YAGT), 211-231 (WYIV…GETN), 259-279 (FFFL…TTLF), 298-318 (WVPL…FIWL), 330-350 (FMSF…LAVA), and 365-385 (WLVG…IDPG). Positions 393–402 (LEEAEQRKLA) are enriched in basic and acidic residues. A disordered region spans residues 393–449 (LEEAEQRKLAEAPSLDRIPWPPPPQAAGRGRPAVSAGASANGSSTVIPADPGPRQER). The span at 418–436 (AAGRGRPAVSAGASANGSS) shows a compositional bias: low complexity.

It belongs to the complex I subunit 1 family. In terms of assembly, NDH-1 is composed of 14 different subunits. Subunits NuoA, H, J, K, L, M, N constitute the membrane sector of the complex.

The protein localises to the cell membrane. The enzyme catalyses a quinone + NADH + 5 H(+)(in) = a quinol + NAD(+) + 4 H(+)(out). In terms of biological role, NDH-1 shuttles electrons from NADH, via FMN and iron-sulfur (Fe-S) centers, to quinones in the respiratory chain. The immediate electron acceptor for the enzyme in this species is believed to be ubiquinone. Couples the redox reaction to proton translocation (for every two electrons transferred, four hydrogen ions are translocated across the cytoplasmic membrane), and thus conserves the redox energy in a proton gradient. This subunit may bind ubiquinone. This is NADH-quinone oxidoreductase subunit H from Frankia casuarinae (strain DSM 45818 / CECT 9043 / HFP020203 / CcI3).